We begin with the raw amino-acid sequence, 339 residues long: DNA-directed RNA polymerase subunit alpha (339 aa).

Residues 1-235 form an alpha N-terminal domain (alpha-NTD) region; sequence MVIQKNWQEL…DQLQVFVNFE (235 aa). Residues 251 to 339 form an alpha C-terminal domain (alpha-CTD) region; the sequence is FNPALLKKVD…DLAKRFEEHY (89 aa).

This sequence belongs to the RNA polymerase alpha chain family. In terms of assembly, homodimer. The RNAP catalytic core consists of 2 alpha, 1 beta, 1 beta' and 1 omega subunit. When a sigma factor is associated with the core the holoenzyme is formed, which can initiate transcription.

The catalysed reaction is RNA(n) + a ribonucleoside 5'-triphosphate = RNA(n+1) + diphosphate. Functionally, DNA-dependent RNA polymerase catalyzes the transcription of DNA into RNA using the four ribonucleoside triphosphates as substrates. This chain is DNA-directed RNA polymerase subunit alpha, found in Methylobacterium radiotolerans (strain ATCC 27329 / DSM 1819 / JCM 2831 / NBRC 15690 / NCIMB 10815 / 0-1).